The sequence spans 309 residues: Cytochrome c1, heme protein, mitochondrial (309 aa).

Residues 1–61 (MFSNLSKRWA…LYADSLTAEA (61 aa)) constitute a mitochondrion transit peptide. At 62–262 (MTAAEHGLHA…TFLNWCAEPE (201 aa)) the chain is on the mitochondrial intermembrane side. Residues 88 to 241 (ASIRRGYQVY…DMVEYEDGTP (154 aa)) enclose the Cytochrome c domain. Cys101, Cys104, and His105 together coordinate heme c. Over residues 131-140 (EFEYDDEPDE) the composition is skewed to acidic residues. Positions 131-168 (EFEYDDEPDEQGNPKKRPGKLSDYIPGPYPNEQAARAA) are disordered. Met225 contacts heme c. The helical transmembrane segment at 263–296 (HDERKRLGLKTVIILSSLYLLSIWVKKFKWAGIK) threads the bilayer. Residues 297-309 (TRKFVFNPPKPRK) lie on the Mitochondrial matrix side of the membrane.

This sequence belongs to the cytochrome c family. In terms of assembly, component of the ubiquinol-cytochrome c oxidoreductase (cytochrome b-c1 complex, complex III, CIII), a multisubunit enzyme composed of 10 subunits. The complex is composed of 3 respiratory subunits cytochrome b (COB), cytochrome c1 (CYT1) and Rieske protein (RIP1), 2 core protein subunits COR1 and QCR2, and 5 low-molecular weight protein subunits QCR6, QCR7, QCR8, QCR9 and QCR10. The complex exists as an obligatory dimer and forms supercomplexes (SCs) in the inner mitochondrial membrane with a monomer or a dimer of cytochrome c oxidase (complex IV, CIV), resulting in 2 different assemblies (supercomplexes III(2)IV and III(2)IV(2)). CYT1 interacts with COX5A at the CIII-CIV interface. The cofactor is heme c.

It localises to the mitochondrion inner membrane. It catalyses the reaction a quinol + 2 Fe(III)-[cytochrome c](out) = a quinone + 2 Fe(II)-[cytochrome c](out) + 2 H(+)(out). Its function is as follows. Component of the ubiquinol-cytochrome c oxidoreductase, a multisubunit transmembrane complex that is part of the mitochondrial electron transport chain which drives oxidative phosphorylation. The respiratory chain contains 3 multisubunit complexes succinate dehydrogenase (complex II, CII), ubiquinol-cytochrome c oxidoreductase (cytochrome b-c1 complex, complex III, CIII) and cytochrome c oxidase (complex IV, CIV), that cooperate to transfer electrons derived from NADH and succinate to molecular oxygen, creating an electrochemical gradient over the inner membrane that drives transmembrane transport and the ATP synthase. The cytochrome b-c1 complex catalyzes electron transfer from ubiquinol to cytochrome c, linking this redox reaction to translocation of protons across the mitochondrial inner membrane, with protons being carried across the membrane as hydrogens on the quinol. In the process called Q cycle, 2 protons are consumed from the matrix, 4 protons are released into the intermembrane space and 2 electrons are passed to cytochrome c. Cytochrome c1 is a catalytic core subunit containing a c-type heme. It transfers electrons from the [2Fe-2S] iron-sulfur cluster of the Rieske protein to cytochrome c. This chain is Cytochrome c1, heme protein, mitochondrial (CYT1), found in Saccharomyces cerevisiae (strain ATCC 204508 / S288c) (Baker's yeast).